Here is a 353-residue protein sequence, read N- to C-terminus: MLISQRPTLTEEVIADNRSKFVIEPLEPGFGYTLGNSLRRTLLSSIPGAAVTSIRIDGVLHEFTTVPGVKEDVTDIILNLKGLVVSSEEDEPVTMYVRKQGPGAVTAGDIVPPAGVTVNNPDLHIATLNDKGKLEIELVVERGRGYVPAVQNKASGAEIGRIPVDSIYSPVLKVTYKVEATRVEQRTDFDRLVLDVETKNSITARDALASAGKTLVELFGLARELNVEAEGIEIGPSPAEADHIASFGLPIEDLDLTVRSYNCLKREGVHTVGELVGRTESDLLDIRNFGQKSIDEVKVKLHSLGLALKDSPASFDPTTVAGYDAATGTWSDTDAGSFGDAEGTEDYAETEQL.

An alpha N-terminal domain (alpha-NTD) region spans residues 1-226; the sequence is MLISQRPTLT…ELFGLARELN (226 aa). The alpha C-terminal domain (alpha-CTD) stretch occupies residues 241–353; it reads ADHIASFGLP…TEDYAETEQL (113 aa). The disordered stretch occupies residues 326–353; sequence ATGTWSDTDAGSFGDAEGTEDYAETEQL. The span at 342–353 shows a compositional bias: acidic residues; that stretch reads EGTEDYAETEQL.

This sequence belongs to the RNA polymerase alpha chain family. Homodimer. The RNAP catalytic core consists of 2 alpha, 1 beta, 1 beta' and 1 omega subunit. When a sigma factor is associated with the core the holoenzyme is formed, which can initiate transcription.

The catalysed reaction is RNA(n) + a ribonucleoside 5'-triphosphate = RNA(n+1) + diphosphate. DNA-dependent RNA polymerase catalyzes the transcription of DNA into RNA using the four ribonucleoside triphosphates as substrates. This Rhodococcus jostii (strain RHA1) protein is DNA-directed RNA polymerase subunit alpha.